A 561-amino-acid polypeptide reads, in one-letter code: Putative transport protein YbjL (561 aa).

The next 5 membrane-spanning stretches (helical) occupy residues 8–28 (LLNGNYILLLFVVLTLGLCLG), 32–52 (LGSIQLGNSIGVLVVSLLLGQ), 66–86 (FMLFIFCVGVEAGPNFFSIFF), 94–114 (MLALVMVGSALVIALGLGKLF), and 158–178 (NLSLGYALTYLIGLVSLIVGA). 2 consecutive RCK C-terminal domains span residues 200 to 288 (RGLD…SFRN) and 292 to 373 (VFDR…RIGF). 5 consecutive transmembrane segments (helical) span residues 383–403 (LLAFCAFFVIGLMIGMITFQF), 406–426 (FSFGMGNAAGLLFAGIMLGFM), 451–471 (VFMAGVGLSAGSGINNGLGAI), 475–495 (MLIAGLIVSLVPVVICFLFGA), and 540–560 (AIANVLLTLAGTIIVMVWPGL).

Belongs to the AAE transporter (TC 2.A.81) family. YbjL subfamily.

It localises to the cell membrane. This is Putative transport protein YbjL from Shigella sonnei (strain Ss046).